We begin with the raw amino-acid sequence, 189 residues long: Prostaglandin-H2 D-isomerase (189 aa).

The N-terminal stretch at 1–24 (MATPSSLWLGLALLGTLGVLQTPA) is a signal peptide. At Q25 the chain carries Pyrrolidone carboxylic acid. N-linked (GlcNAc...) asparagine glycosylation is present at N49. C63 acts as the Nucleophile in catalysis. N76 is a glycosylation site (N-linked (GlcNAc...) asparagine). An intrachain disulfide couples C87 to C184.

Belongs to the calycin superfamily. Lipocalin family. As to quaternary structure, monomer. As to expression, abundant in the brain and CNS, where it is expressed in tissues of the blood-brain barrier and secreted into the cerebro-spinal fluid.

The protein localises to the rough endoplasmic reticulum. The protein resides in the nucleus membrane. Its subcellular location is the golgi apparatus. It is found in the cytoplasm. It localises to the perinuclear region. The protein localises to the secreted. It catalyses the reaction prostaglandin H2 = prostaglandin D2. Its function is as follows. Catalyzes the conversion of PGH2 to PGD2, a prostaglandin involved in smooth muscle contraction/relaxation and a potent inhibitor of platelet aggregation. Involved in a variety of CNS functions, such as sedation, NREM sleep and PGE2-induced allodynia, and may have an anti-apoptotic role in oligodendrocytes. Binds small non-substrate lipophilic molecules, including biliverdin, bilirubin, retinal, retinoic acid and thyroid hormone, and may act as a scavenger for harmful hydrophobic molecules and as a secretory retinoid and thyroid hormone transporter. Possibly involved in development and maintenance of the blood-brain, blood-retina, blood-aqueous humor and blood-testis barrier. It is likely to play important roles in both maturation and maintenance of the central nervous system and male reproductive system. Involved in PLA2G3-dependent maturation of mast cells. PLA2G3 is secreted by immature mast cells and acts on nearby fibroblasts upstream to PTDGS to synthesize PGD2, which in turn promotes mast cell maturation and degranulation via PTGDR. The protein is Prostaglandin-H2 D-isomerase (PTGDS) of Sus scrofa (Pig).